The sequence spans 336 residues: tRNA N6-adenosine threonylcarbamoyltransferase (336 aa).

Fe cation-binding residues include His-114 and His-118. Substrate is bound by residues 136-140 (LVSGG), Asp-169, Gly-182, Asp-186, and Asn-275. Asp-301 lines the Fe cation pocket.

Belongs to the KAE1 / TsaD family. Requires Fe(2+) as cofactor.

The protein resides in the cytoplasm. The enzyme catalyses L-threonylcarbamoyladenylate + adenosine(37) in tRNA = N(6)-L-threonylcarbamoyladenosine(37) in tRNA + AMP + H(+). Functionally, required for the formation of a threonylcarbamoyl group on adenosine at position 37 (t(6)A37) in tRNAs that read codons beginning with adenine. Is involved in the transfer of the threonylcarbamoyl moiety of threonylcarbamoyl-AMP (TC-AMP) to the N6 group of A37, together with TsaE and TsaB. TsaD likely plays a direct catalytic role in this reaction. This Streptococcus pneumoniae (strain CGSP14) protein is tRNA N6-adenosine threonylcarbamoyltransferase.